A 367-amino-acid chain; its full sequence is PR domain zinc finger protein 12 (367 aa).

In terms of domain architecture, SET spans 86–203 (AEVIIAQSSI…PDQELLVWYG (118 aa)). 3 consecutive C2H2-type zinc fingers follow at residues 243–265 (MRCVICHRGFNSRSNLRSHMRIH), 271–293 (FVCRFCNRRFSQSSTLRNHVRLH), and 299–323 (YKCQVCQSAYSQLAGLRAHQKSARH). The tract at residues 318 to 337 (QKSARHRPPSTALQAHSPAL) is disordered.

The protein belongs to the class V-like SAM-binding methyltransferase superfamily. In terms of assembly, interacts with EHMT2. As to expression, not found in adult tissues except in dorsal root ganglia.

Its subcellular location is the nucleus. In terms of biological role, transcriptional regulator necessary for the development of nociceptive neurons, playing a key role in determining the nociceptive lineage from neural crest cell progenitors. Initiates neurogenesis and activates downstream pro-neuronal transcription factors, such as NEUROD1, BRN3A, and ISL1, specifically within nociceptive neurons, while repressing non-nociceptor cell fates. Essential for the proper function of nociceptors in adults, influencing both their excitability and their gene expression, thereby impacting how these neurons respond to various pain stimuli. The polypeptide is PR domain zinc finger protein 12 (PRDM12) (Homo sapiens (Human)).